The following is a 261-amino-acid chain: V-type proton ATPase subunit D (261 aa).

Ser241 carries the post-translational modification Phosphoserine.

Belongs to the V-ATPase D subunit family. V-ATPase is a heteromultimeric enzyme composed of a peripheral catalytic V1 complex (components A to H) attached to an integral membrane V0 proton pore complex (components: a, c, c'', d and e).

Its subcellular location is the vacuole membrane. Functionally, subunit of the peripheral V1 complex of vacuolar ATPase. V-ATPase is responsible for acidifying a variety of intracellular compartments in eukaryotic cells, thus providing most of the energy required for transport processes in the vacuolar system. The chain is V-type proton ATPase subunit D (VHA-D) from Arabidopsis thaliana (Mouse-ear cress).